A 973-amino-acid chain; its full sequence is Sensor histidine kinase TmoS (973 aa).

Residues 32-103 form the PAS 1 domain; sequence REELARIIFD…NQKRLVEAAS (72 aa). The PAC 1 domain maps to 108 to 162; that stretch reads VRCDIEILGKSGGREVIAVDFSLLPIRDEQENIVFLLAEGRNITDKKKAEAMLAL. The Histidine kinase 1 domain maps to 187–405; that stretch reads KVSHELRTPL…LFQVKLPLNA (219 aa). Residue histidine 190 is modified to Phosphohistidine; by autocatalysis. The Response regulatory domain maps to 452 to 567; that stretch reads RVLIVEDNPD…ELRARVSNLI (116 aa). Aspartate 500 is subject to 4-aspartylphosphate. The region spanning 611 to 681 is the PAS 2 domain; it reads SEARWKAVYE…QRLARLLQSG (71 aa). A PAC 2 domain is found at 685–737; that stretch reads YSVECSYLCKNGSTIWANASVSLMSPRVDEPQVILQIIDDITEKKQAQETLNQ. One can recognise a Histidine kinase 2 domain in the interval 757–973; the sequence is YIAHEINQPL…ACFFVSIPVS (217 aa). Histidine 760 carries the post-translational modification Phosphohistidine.

Post-translationally, autophosphorylated. Activation requires a sequential transfer of a phosphate group from a His in the primary transmitter domain, to an Asp in the receiver domain and to a His in the secondary transmitter domain.

The protein resides in the cytoplasm. It carries out the reaction ATP + protein L-histidine = ADP + protein N-phospho-L-histidine.. With respect to regulation, activity is regulated by agonists and antagonists. Binding of agonists such as toluene or benzene to TmoS stimulates autophosphorylation. Toluene causes the most pronounced increase, followed by benzene, chlorobenzene and ethylbenzene. Activity is inhibited by antagonists such as o-xylene, o-chlorotoluene and trimethylbenzene isomers, which bind to TmoS but do not stimulate autophosphorylation. Its function is as follows. Member of the two-component regulatory system TmoS/TmoT involved in the regulation of toluene degradation. Probably phosphorylates TmoT via a four-step phosphorelay in response to toluene. Can also be induced by benzene and ethylbenzene. This Ectopseudomonas mendocina (Pseudomonas mendocina) protein is Sensor histidine kinase TmoS (tmoS).